Consider the following 320-residue polypeptide: tRNA uridine(34) hydroxylase (320 aa).

One can recognise a Rhodanese domain in the interval 123-217 (EDENTVILDA…YGKDPETKGL (95 aa)). Cys177 acts as the Cysteine persulfide intermediate in catalysis.

This sequence belongs to the TrhO family.

It catalyses the reaction uridine(34) in tRNA + AH2 + O2 = 5-hydroxyuridine(34) in tRNA + A + H2O. Catalyzes oxygen-dependent 5-hydroxyuridine (ho5U) modification at position 34 in tRNAs. The polypeptide is tRNA uridine(34) hydroxylase (Staphylococcus epidermidis (strain ATCC 35984 / DSM 28319 / BCRC 17069 / CCUG 31568 / BM 3577 / RP62A)).